The sequence spans 617 residues: Protein fem-1 homolog C (617 aa).

Position 1 is an N-acetylmethionine (Met-1). ANK repeat units lie at residues 2 to 31 (DLKT…KEEV), 40 to 70 (NGAT…SIEV), 82 to 111 (EGAP…SVNN), 115 to 144 (TNST…DLEV), 148 to 177 (HGHT…DVNR), 181 to 210 (KGNT…KMEK), and 213 to 242 (YGMT…TSKT). TPR repeat units lie at residues 245–279 (INAL…RYSD) and 338–371 (SYYI…QQNN). ANK repeat units lie at residues 481-523 (NNFS…DVNV) and 527-556 (DDNS…HFDA).

It belongs to the fem-1 family. As to quaternary structure, component of a CRL2 E3 ubiquitin-protein ligase complex, also named ECS (Elongin BC-CUL2/5-SOCS-box protein) complex, composed of CUL2, Elongin BC (ELOB and ELOC), RBX1 and substrate-specific adapter FEM1C.

It participates in protein modification; protein ubiquitination. Functionally, substrate-recognition component of a Cul2-RING (CRL2) E3 ubiquitin-protein ligase complex of the DesCEND (destruction via C-end degrons) pathway, which recognizes a C-degron located at the extreme C terminus of target proteins, leading to their ubiquitination and degradation. The C-degron recognized by the DesCEND pathway is usually a motif of less than ten residues and can be present in full-length proteins, truncated proteins or proteolytically cleaved forms. The CRL2(FEM1C) complex specifically recognizes proteins with an arginine at the C-terminus: recognizes and binds proteins ending with -Lys/Arg-Xaa-Arg and -Lys/Arg-Xaa-Xaa-Arg C-degrons, such as SIL1 or OR51B2, leading to their ubiquitination and degradation. The CRL2(FEM1C) complex mediates ubiquitination and degradation of truncated MSRB1/SEPX1 selenoproteins produced by failed UGA/Sec decoding. This chain is Protein fem-1 homolog C, found in Bos taurus (Bovine).